The chain runs to 302 residues: tRNA pseudouridine synthase B (302 aa).

Catalysis depends on D45, which acts as the Nucleophile.

Belongs to the pseudouridine synthase TruB family. Type 1 subfamily.

The catalysed reaction is uridine(55) in tRNA = pseudouridine(55) in tRNA. Responsible for synthesis of pseudouridine from uracil-55 in the psi GC loop of transfer RNAs. The polypeptide is tRNA pseudouridine synthase B (Francisella tularensis subsp. tularensis (strain WY96-3418)).